The chain runs to 207 residues: Ribonuclease HII (207 aa).

The RNase H type-2 domain occupies 12–201 (DLVAGVDEVG…VRAAWEAREG (190 aa)). Residues Asp-18, Glu-19, and Asp-110 each coordinate a divalent metal cation.

It belongs to the RNase HII family. Mn(2+) serves as cofactor. Requires Mg(2+) as cofactor.

Its subcellular location is the cytoplasm. It carries out the reaction Endonucleolytic cleavage to 5'-phosphomonoester.. Its function is as follows. Endonuclease that specifically degrades the RNA of RNA-DNA hybrids. In Pseudomonas putida (strain W619), this protein is Ribonuclease HII.